The chain runs to 68 residues: ATP synthase subunit c (68 aa).

The next 2 helical transmembrane spans lie at 5 to 25 and 47 to 67; these read AAAI…GMIV and FIGV…AFMV.

This sequence belongs to the ATPase C chain family. As to quaternary structure, F-type ATPases have 2 components, F(1) - the catalytic core - and F(0) - the membrane proton channel. F(1) has five subunits: alpha(3), beta(3), gamma(1), delta(1), epsilon(1). F(0) has three main subunits: a(1), b(2) and c(10-14). The alpha and beta chains form an alternating ring which encloses part of the gamma chain. F(1) is attached to F(0) by a central stalk formed by the gamma and epsilon chains, while a peripheral stalk is formed by the delta and b chains.

Its subcellular location is the cell membrane. F(1)F(0) ATP synthase produces ATP from ADP in the presence of a proton or sodium gradient. F-type ATPases consist of two structural domains, F(1) containing the extramembraneous catalytic core and F(0) containing the membrane proton channel, linked together by a central stalk and a peripheral stalk. During catalysis, ATP synthesis in the catalytic domain of F(1) is coupled via a rotary mechanism of the central stalk subunits to proton translocation. Its function is as follows. Key component of the F(0) channel; it plays a direct role in translocation across the membrane. A homomeric c-ring of between 10-14 subunits forms the central stalk rotor element with the F(1) delta and epsilon subunits. This is ATP synthase subunit c from Oceanobacillus iheyensis (strain DSM 14371 / CIP 107618 / JCM 11309 / KCTC 3954 / HTE831).